Here is an 85-residue protein sequence, read N- to C-terminus: NAD(P)H-quinone oxidoreductase subunit O (85 aa).

This sequence belongs to the complex I NdhO subunit family. As to quaternary structure, NDH-1 can be composed of about 15 different subunits; different subcomplexes with different compositions have been identified which probably have different functions.

The protein localises to the cellular thylakoid membrane. The enzyme catalyses a plastoquinone + NADH + (n+1) H(+)(in) = a plastoquinol + NAD(+) + n H(+)(out). It catalyses the reaction a plastoquinone + NADPH + (n+1) H(+)(in) = a plastoquinol + NADP(+) + n H(+)(out). Its function is as follows. NDH-1 shuttles electrons from an unknown electron donor, via FMN and iron-sulfur (Fe-S) centers, to quinones in the respiratory and/or the photosynthetic chain. The immediate electron acceptor for the enzyme in this species is believed to be plastoquinone. Couples the redox reaction to proton translocation, and thus conserves the redox energy in a proton gradient. Cyanobacterial NDH-1 also plays a role in inorganic carbon-concentration. The chain is NAD(P)H-quinone oxidoreductase subunit O from Synechococcus sp. (strain CC9311).